Here is a 267-residue protein sequence, read N- to C-terminus: 3-methyl-2-oxobutanoate hydroxymethyltransferase (267 aa).

Mg(2+) contacts are provided by aspartate 45 and aspartate 84. Residues 45–46 (DS), aspartate 84, and lysine 113 each bind 3-methyl-2-oxobutanoate. Glutamate 115 is a Mg(2+) binding site. Catalysis depends on glutamate 182, which acts as the Proton acceptor.

The protein belongs to the PanB family. In terms of assembly, homodecamer; pentamer of dimers. Mg(2+) serves as cofactor.

The protein localises to the cytoplasm. The catalysed reaction is 3-methyl-2-oxobutanoate + (6R)-5,10-methylene-5,6,7,8-tetrahydrofolate + H2O = 2-dehydropantoate + (6S)-5,6,7,8-tetrahydrofolate. The protein operates within cofactor biosynthesis; coenzyme A biosynthesis. In terms of biological role, catalyzes the reversible reaction in which hydroxymethyl group from 5,10-methylenetetrahydrofolate is transferred onto alpha-ketoisovalerate to form ketopantoate. In Saccharolobus islandicus (strain Y.N.15.51 / Yellowstone #2) (Sulfolobus islandicus), this protein is 3-methyl-2-oxobutanoate hydroxymethyltransferase.